The chain runs to 347 residues: Protein phosphatase 1 regulatory subunit 3G (347 aa).

The disordered stretch occupies residues Met1–Ala77. Residues Ala13–Pro22 show a composition bias toward polar residues. A Phosphoserine modification is found at Ser81. A CBM21 domain is found at Glu200–Arg339. The disordered stretch occupies residues Asp258–Thr286.

In terms of biological role, glycogen-targeting subunit for protein phosphatase 1 (PP1). Involved in the regulation of hepatic glycogenesis in a manner coupled to the fasting-feeding cycle and distinct from other glycogen-targeting subunits. The sequence is that of Protein phosphatase 1 regulatory subunit 3G (Ppp1r3g) from Mus musculus (Mouse).